We begin with the raw amino-acid sequence, 160 residues long: S-ribosylhomocysteine lyase (160 aa).

Fe cation is bound by residues His-57, His-61, and Cys-127.

This sequence belongs to the LuxS family. In terms of assembly, homodimer. Fe cation serves as cofactor.

The enzyme catalyses S-(5-deoxy-D-ribos-5-yl)-L-homocysteine = (S)-4,5-dihydroxypentane-2,3-dione + L-homocysteine. Its function is as follows. Involved in the synthesis of autoinducer 2 (AI-2) which is secreted by bacteria and is used to communicate both the cell density and the metabolic potential of the environment. The regulation of gene expression in response to changes in cell density is called quorum sensing. Catalyzes the transformation of S-ribosylhomocysteine (RHC) to homocysteine (HC) and 4,5-dihydroxy-2,3-pentadione (DPD). In Streptococcus sanguinis (strain SK36), this protein is S-ribosylhomocysteine lyase.